Reading from the N-terminus, the 125-residue chain is Small ribosomal subunit protein uS12 (125 aa).

Position 89 is a 3-methylthioaspartic acid (Asp-89). The segment at 105 to 125 is disordered; sequence QGVKDRKQSRSKYGAKKPKAK. A compositionally biased stretch (basic residues) spans 113–125; sequence SRSKYGAKKPKAK.

The protein belongs to the universal ribosomal protein uS12 family. As to quaternary structure, part of the 30S ribosomal subunit. Contacts proteins S8 and S17. May interact with IF1 in the 30S initiation complex.

Its function is as follows. With S4 and S5 plays an important role in translational accuracy. Functionally, interacts with and stabilizes bases of the 16S rRNA that are involved in tRNA selection in the A site and with the mRNA backbone. Located at the interface of the 30S and 50S subunits, it traverses the body of the 30S subunit contacting proteins on the other side and probably holding the rRNA structure together. The combined cluster of proteins S8, S12 and S17 appears to hold together the shoulder and platform of the 30S subunit. This Delftia acidovorans (strain DSM 14801 / SPH-1) protein is Small ribosomal subunit protein uS12.